A 189-amino-acid polypeptide reads, in one-letter code: Large ribosomal subunit protein bL9 (189 aa).

The protein belongs to the bacterial ribosomal protein bL9 family.

Binds to the 23S rRNA. The protein is Large ribosomal subunit protein bL9 of Cereibacter sphaeroides (strain ATCC 17023 / DSM 158 / JCM 6121 / CCUG 31486 / LMG 2827 / NBRC 12203 / NCIMB 8253 / ATH 2.4.1.) (Rhodobacter sphaeroides).